A 601-amino-acid chain; its full sequence is Glutathione-regulated potassium-efflux system protein KefB (601 aa).

Helical transmembrane passes span 4–24 (ADLL…VPLA), 29–49 (IGAV…GLGF), 55–75 (EILH…GLEL), 87–107 (IFGV…GLLM), 111–131 (FLWQ…TAMA), 152–172 (VLLF…LLAG), 177–197 (HFDW…LIGG), 207–227 (FIAA…LVLS), 230–250 (LFMD…GVLL), 262–282 (AIDP…GMSL), 284–304 (LGVL…LVVI), 324–344 (MQFA…FSTA), and 356–376 (ALLL…MKGI). The region spanning 400 to 519 (KPQVIVVGFG…AGVTQFSRET (120 aa)) is the RCK N-terminal domain.

This sequence belongs to the monovalent cation:proton antiporter 2 (CPA2) transporter (TC 2.A.37) family. KefB subfamily. Interacts with the regulatory subunit KefG.

It localises to the cell inner membrane. In terms of biological role, pore-forming subunit of a potassium efflux system that confers protection against electrophiles. Catalyzes K(+)/H(+) antiport. The chain is Glutathione-regulated potassium-efflux system protein KefB from Salmonella newport (strain SL254).